Here is a 237-residue protein sequence, read N- to C-terminus: LexA repressor (237 aa).

The segment at residues 26–46 (FDEMKDALDLRSKSGIHRLIT) is a DNA-binding region (H-T-H motif). Catalysis depends on for autocatalytic cleavage activity residues Ser-158 and Lys-196.

The protein belongs to the peptidase S24 family. In terms of assembly, homodimer.

The catalysed reaction is Hydrolysis of Ala-|-Gly bond in repressor LexA.. Represses a number of genes involved in the response to DNA damage (SOS response), including recA and lexA. In the presence of single-stranded DNA, RecA interacts with LexA causing an autocatalytic cleavage which disrupts the DNA-binding part of LexA, leading to derepression of the SOS regulon and eventually DNA repair. The protein is LexA repressor of Rhodopseudomonas palustris (strain BisA53).